A 394-amino-acid polypeptide reads, in one-letter code: Elongation factor Tu (394 aa).

A tr-type G domain is found at 10 to 204; that stretch reads RTHINVGTIG…ILDNYIPEPK (195 aa). The tract at residues 19 to 26 is G1; the sequence is GHVDHGKT. A GTP-binding site is contributed by 19 to 26; that stretch reads GHVDHGKT. Residue T26 participates in Mg(2+) binding. A G2 region spans residues 60 to 64; it reads GITIN. The interval 81–84 is G3; the sequence is DCPG. GTP-binding positions include 81-85 and 136-139; these read DCPGH and NKCD. A G4 region spans residues 136 to 139; it reads NKCD. The interval 174 to 176 is G5; sequence SAL.

The protein belongs to the TRAFAC class translation factor GTPase superfamily. Classic translation factor GTPase family. EF-Tu/EF-1A subfamily. Monomer.

The protein resides in the cytoplasm. It catalyses the reaction GTP + H2O = GDP + phosphate + H(+). Its function is as follows. GTP hydrolase that promotes the GTP-dependent binding of aminoacyl-tRNA to the A-site of ribosomes during protein biosynthesis. The sequence is that of Elongation factor Tu from Blochmanniella floridana.